Consider the following 1131-residue polypeptide: PolyA-specific ribonuclease subunit panl-2 (1131 aa).

Positions 489–864 (VTMQSTHGMN…LPALLAYKKK (376 aa)) constitute a USP domain. Positions 909–1074 (VGLDAEFIKI…VDARYALKLY (166 aa)) constitute an Exonuclease domain. Residues 1104 to 1115 (QTSSPLVVSTTR) are compositionally biased toward polar residues. Positions 1104-1131 (QTSSPLVVSTTRKTPEDTNPADAAPKSV) are disordered.

This Caenorhabditis elegans protein is PolyA-specific ribonuclease subunit panl-2.